The primary structure comprises 513 residues: UDP-N-acetylmuramyl-tripeptide synthetase (513 aa).

Ser38 lines the UDP-N-acetyl-alpha-D-muramoyl-L-alanyl-D-glutamate pocket. 115–121 is a binding site for ATP; sequence GTKGKTT. Residues 161–162, Ser188, and Arg196 each bind UDP-N-acetyl-alpha-D-muramoyl-L-alanyl-D-glutamate; that span reads TT. N6-carboxylysine is present on Lys230.

The protein belongs to the MurCDEF family. MurE subfamily. In terms of processing, carboxylation is probably crucial for Mg(2+) binding and, consequently, for the gamma-phosphate positioning of ATP.

Its subcellular location is the cytoplasm. It participates in cell wall biogenesis; peptidoglycan biosynthesis. In terms of biological role, catalyzes the addition of an amino acid to the nucleotide precursor UDP-N-acetylmuramoyl-L-alanyl-D-glutamate (UMAG) in the biosynthesis of bacterial cell-wall peptidoglycan. The sequence is that of UDP-N-acetylmuramyl-tripeptide synthetase from Latilactobacillus sakei subsp. sakei (strain 23K) (Lactobacillus sakei subsp. sakei).